A 308-amino-acid polypeptide reads, in one-letter code: NADH-cytochrome b5 reductase 1 (308 aa).

Residues 10–27 (INGVYIPSALLIFGTTII) traverse the membrane as a helical segment. In terms of domain architecture, FAD-binding FR-type spans 59 to 164 (TEFQNFVLKD…RGPKGAMVYT (106 aa)). FAD-binding positions include 144–159 (TTLR…GPKG) and 170–207 (HIGM…QIDL).

This sequence belongs to the flavoprotein pyridine nucleotide cytochrome reductase family. Monomer. Component of the 2-(3-amino-3-carboxypropyl)histidine synthase complex composed of DPH1, DPH2, DPH3 and a NADH-dependent reductase, predominantly CBR1. Requires FAD as cofactor.

It localises to the mitochondrion outer membrane. It catalyses the reaction 2 Fe(III)-[cytochrome b5] + NADH = 2 Fe(II)-[cytochrome b5] + NAD(+) + H(+). The enzyme catalyses 2 Fe(3+)-[Dph3] + NADH = 2 Fe(2+)-[Dph3] + NAD(+) + H(+). Its pathway is protein modification; peptidyl-diphthamide biosynthesis. Its function is as follows. NADH-dependent reductase for DPH3 and cytochrome b5. Required for the first step of diphthamide biosynthesis, a post-translational modification of histidine which occurs in elongation factor 2. DPH1 and DPH2 transfer a 3-amino-3-carboxypropyl (ACP) group from S-adenosyl-L-methionine (SAM) to a histidine residue, the reaction is assisted by a reduction system comprising DPH3 and a NADH-dependent reductase, predominantly CBR1. By reducing DPH3, also involved in the formation of the tRNA wobble base modification mcm5s 2U (5-methoxycarbonylmethyl-2-thiouridine), mediated by the elongator complex. The cytochrome b5/NADH cytochrome b5 reductase electron transfer system supports the catalytic activity of several sterol biosynthetic enzymes. The polypeptide is NADH-cytochrome b5 reductase 1 (CBR1) (Coccidioides immitis (strain RS) (Valley fever fungus)).